The following is a 239-amino-acid chain: 7-cyano-7-deazaguanine synthase (239 aa).

8–18 (FSGGLDSTACL) lines the ATP pocket. The Zn(2+) site is built by Cys-194, Cys-209, Cys-212, and Cys-215.

Belongs to the QueC family. It depends on Zn(2+) as a cofactor.

It catalyses the reaction 7-carboxy-7-deazaguanine + NH4(+) + ATP = 7-cyano-7-deazaguanine + ADP + phosphate + H2O + H(+). Its pathway is purine metabolism; 7-cyano-7-deazaguanine biosynthesis. Its function is as follows. Catalyzes the ATP-dependent conversion of 7-carboxy-7-deazaguanine (CDG) to 7-cyano-7-deazaguanine (preQ(0)). The sequence is that of 7-cyano-7-deazaguanine synthase from Pyrococcus horikoshii (strain ATCC 700860 / DSM 12428 / JCM 9974 / NBRC 100139 / OT-3).